Reading from the N-terminus, the 171-residue chain is MKLILIKPVKKLGKIMDIVDVANGFGRNYLLPRNYAIRATNANLEIVKSTVQQLNEKNQKGIDAAQAVMQKIDRSFITFICQTSDDGKLFGSITAKEIIKKLQISSDIKAYIDIKPIKTAGIHEVEVSLHAEVHCKIFINVARSNTEAQEYLKKFNAALQNTNNNVLVEKN.

It belongs to the bacterial ribosomal protein bL9 family.

Its function is as follows. Binds to the 23S rRNA. This is Large ribosomal subunit protein bL9 from Orientia tsutsugamushi (strain Ikeda) (Rickettsia tsutsugamushi).